We begin with the raw amino-acid sequence, 267 residues long: Putative [LysW]-aminoadipate/[LysW]-glutamate kinase (267 aa).

Substrate is bound by residues 37 to 38 (GG), arginine 64, and asparagine 169.

Belongs to the acetylglutamate kinase family. LysZ subfamily.

It is found in the cytoplasm. It catalyses the reaction [amino-group carrier protein]-C-terminal-N-(1,4-dicarboxybutan-1-yl)-L-glutamine + ATP = [amino-group carrier protein]-C-terminal-N-(1-carboxy-5-phosphooxy-5-oxopentan-1-yl)-L-glutamine + ADP. It carries out the reaction [amino-group carrier protein]-C-terminal-gamma-(L-glutamyl)-L-glutamate + ATP = [amino-group carrier protein]-C-terminal-gamma-(5-phospho-L-glutamyl)-L-glutamate + ADP. It participates in amino-acid biosynthesis; L-lysine biosynthesis via AAA pathway; L-lysine from L-alpha-aminoadipate (Thermus route): step 2/5. It functions in the pathway amino-acid biosynthesis; L-arginine biosynthesis. Its function is as follows. Involved in both the arginine and lysine biosynthetic pathways. Phosphorylates the LysW-bound precursors glutamate (for arginine biosynthesis), respectively alpha-aminoadipate (for lysine biosynthesis). The sequence is that of Putative [LysW]-aminoadipate/[LysW]-glutamate kinase from Nitrosopumilus maritimus (strain SCM1).